The chain runs to 396 residues: Arginine biosynthesis bifunctional protein ArgJ (396 aa).

Substrate is bound by residues Thr-150, Lys-177, Thr-188, Glu-267, Asn-391, and Thr-396. Thr-188 acts as the Nucleophile in catalysis.

It belongs to the ArgJ family. In terms of assembly, heterotetramer of two alpha and two beta chains.

Its subcellular location is the cytoplasm. It catalyses the reaction N(2)-acetyl-L-ornithine + L-glutamate = N-acetyl-L-glutamate + L-ornithine. It carries out the reaction L-glutamate + acetyl-CoA = N-acetyl-L-glutamate + CoA + H(+). The protein operates within amino-acid biosynthesis; L-arginine biosynthesis; L-ornithine and N-acetyl-L-glutamate from L-glutamate and N(2)-acetyl-L-ornithine (cyclic): step 1/1. It participates in amino-acid biosynthesis; L-arginine biosynthesis; N(2)-acetyl-L-ornithine from L-glutamate: step 1/4. Functionally, catalyzes two activities which are involved in the cyclic version of arginine biosynthesis: the synthesis of N-acetylglutamate from glutamate and acetyl-CoA as the acetyl donor, and of ornithine by transacetylation between N(2)-acetylornithine and glutamate. The sequence is that of Arginine biosynthesis bifunctional protein ArgJ from Wolinella succinogenes (strain ATCC 29543 / DSM 1740 / CCUG 13145 / JCM 31913 / LMG 7466 / NCTC 11488 / FDC 602W) (Vibrio succinogenes).